A 58-amino-acid polypeptide reads, in one-letter code: INSICLLPSDGGVCRGRFTNYYYNSRTRRCETFRYGGCGGNANNFHTLRQCQATCYSS.

Residues 5-55 (CLLPSDGGVCRGRFTNYYYNSRTRRCETFRYGGCGGNANNFHTLRQCQATC) form the BPTI/Kunitz inhibitor domain. 3 disulfides stabilise this stretch: C5–C55, C14–C38, and C30–C51.

It belongs to the venom Kunitz-type family. Sea anemone type 2 potassium channel toxin subfamily.

It is found in the secreted. The protein resides in the nematocyst. Serine protease inhibitor. Shows activity on trypsin and also shows a weak inhibition against alpha-chymotrypsin. This Anthopleura aff. xanthogrammica (Sea anemone) protein is PI-actitoxin-Axm2b.